The sequence spans 399 residues: Glucosamine kinase (399 aa).

Residues Lys98, 149–151, and Asp156 each bind ATP; that span reads EYL. Asp262 is a D-glucosamine binding site. Mg(2+) contacts are provided by Gln267, Asp279, and Asp281. Residues 366-381 carry the Substrate specificity determinant motif motif; sequence QVLREIIYAARHLPRW. Residue Glu370 participates in D-glucosamine binding.

It belongs to the actinobacterial glucosamine kinase family. Monomer. Mg(2+) is required as a cofactor.

It catalyses the reaction D-glucosamine + ATP = D-glucosamine 6-phosphate + ADP + H(+). Catalyzes the ATP-dependent phosphorylation of D-glucosamine (GlcN) to D-glucosamine 6-phosphate. May be involved in the phosphorylation of acquired extracellular GlcN derived from the hydrolysis of chitosan, i.e., in the incorporation of exogenous GlcN into the bacterial GlcNAc metabolism. Is unable to phosphorylate maltose. The chain is Glucosamine kinase from Mycolicibacterium smegmatis (strain ATCC 700084 / mc(2)155) (Mycobacterium smegmatis).